The primary structure comprises 139 residues: Probable cytochrome b5 (139 aa).

In terms of domain architecture, Cytochrome b5 heme-binding spans 2–78; sequence SAEFTYQDVA…LEPLLVGTLK (77 aa). Histidine 37 and histidine 61 together coordinate heme. Residues 105-125 form a helical membrane-spanning segment; sequence GLGIGLYAVLVLGGLAGFAAY.

The protein belongs to the cytochrome b5 family.

The protein localises to the endoplasmic reticulum membrane. It is found in the microsome membrane. Membrane bound hemoprotein which function as an electron carrier for several membrane bound oxygenases. This is Probable cytochrome b5 from Neurospora crassa (strain ATCC 24698 / 74-OR23-1A / CBS 708.71 / DSM 1257 / FGSC 987).